A 261-amino-acid polypeptide reads, in one-letter code: Undecaprenyl-diphosphatase (261 aa).

8 helical membrane passes run 1 to 21, 41 to 61, 69 to 89, 95 to 115, 129 to 149, 169 to 186, 206 to 226, and 241 to 261; these read MNYI…FLPV, FTKL…VVLY, LDFY…GLLF, ALLE…IILL, ITYL…IPGV, AAEF…GATL, ILII…KTFI, and RIVA…LTLI.

The protein belongs to the UppP family.

The protein resides in the cell inner membrane. The enzyme catalyses di-trans,octa-cis-undecaprenyl diphosphate + H2O = di-trans,octa-cis-undecaprenyl phosphate + phosphate + H(+). Its function is as follows. Catalyzes the dephosphorylation of undecaprenyl diphosphate (UPP). Confers resistance to bacitracin. The sequence is that of Undecaprenyl-diphosphatase from Flavobacterium psychrophilum (strain ATCC 49511 / DSM 21280 / CIP 103535 / JIP02/86).